An 899-amino-acid chain; its full sequence is Linoleate 13S-lipoxygenase 2-1, chloroplastic (899 aa).

Residues 1 to 40 (MLKPQLQQSSQSTKALIPSWNTNPLFLASFPINILNKNFR) constitute a chloroplast transit peptide. The 123-residue stretch at 78 to 200 (VQKQVNLNLS…DNPDKRIFFT (123 aa)) folds into the PLAT domain. In terms of domain architecture, Lipoxygenase spans 203-899 (SYLPSQTPSG…GKGVPYSISI (697 aa)). The tract at residues 252–287 (SNNDDAKRPVLGGKELPYPRRCKTGRPRSKKDPLSE) is disordered. Positions 271–280 (RRCKTGRPRS) are enriched in basic residues. Fe cation-binding residues include H557, H562, H749, N753, and I899.

Belongs to the lipoxygenase family. In terms of assembly, monomer. The cofactor is Fe cation. In terms of tissue distribution, expressed in leaves and floral buds.

Its subcellular location is the plastid. The protein localises to the chloroplast stroma. It localises to the chloroplast thylakoid. The catalysed reaction is (9Z,12Z)-octadecadienoate + O2 = (13S)-hydroperoxy-(9Z,11E)-octadecadienoate. It catalyses the reaction (9Z,12Z,15Z)-octadecatrienoate + O2 = (13S)-hydroperoxy-(9Z,11E,15Z)-octadecatrienoate. The protein operates within lipid metabolism; oxylipin biosynthesis. Its function is as follows. Plant lipoxygenase involved in a number of diverse aspects of plant physiology including growth and development, pest resistance, and senescence. May not be involved in the bulk production of jasmonate upon wounding. Catalyzes the hydroperoxidation of lipids containing a cis,cis-1,4-pentadiene structure. Linolenic acid is the preferred substrate, before linoleic and arachidonic acids. Also has some activity with phosphatidylglycerol, but not with galactolipids. The polypeptide is Linoleate 13S-lipoxygenase 2-1, chloroplastic (Solanum tuberosum (Potato)).